Here is a 462-residue protein sequence, read N- to C-terminus: Polygalacturonase (462 aa).

Residues 1 to 22 (MALTRLLLPISILWFCFYSSHT) form the signal peptide. Residue asparagine 173 is glycosylated (N-linked (GlcNAc...) asparagine). Aspartate 278 functions as the Proton donor in the catalytic mechanism. A disulfide bridge links cysteine 280 with cysteine 297. Asparagine 294 carries an N-linked (GlcNAc...) asparagine glycan. The active site involves histidine 301. Asparagine 358 carries an N-linked (GlcNAc...) asparagine glycan. Intrachain disulfides connect cysteine 407–cysteine 413 and cysteine 435–cysteine 460.

The protein belongs to the glycosyl hydrolase 28 family.

The protein resides in the secreted. It is found in the cell wall. It carries out the reaction (1,4-alpha-D-galacturonosyl)n+m + H2O = (1,4-alpha-D-galacturonosyl)n + (1,4-alpha-D-galacturonosyl)m.. Acts in concert with the pectinesterase, in the ripening process. Is involved in cell wall metabolism, specifically in polyuronide degradation. This chain is Polygalacturonase, found in Persea americana (Avocado).